The primary structure comprises 300 residues: Transcription termination/antitermination protein NusG (300 aa).

The interval 1–99 is disordered; sequence MSDPNVNDAI…EAEEPELDPI (99 aa). 2 stretches are compositionally biased toward acidic residues: residues 14–41 and 47–97; these read ESVE…EAAD and ETDE…PELD.

Belongs to the NusG family.

Its function is as follows. Participates in transcription elongation, termination and antitermination. This is Transcription termination/antitermination protein NusG from Streptomyces coelicolor (strain ATCC BAA-471 / A3(2) / M145).